The sequence spans 222 residues: MEVKGKETASVLCLSKYVDLSSEESHRYYLARRNGLQMLRDRGYEVSDEDINLSLHDFRTVYGERPDVDRLRISALHRSDSTKKVKIVFFGTSMVKVNAIRSVVADILSQETITGLILVLQNHVTNQALKAIELFSFKVEIFQITDLLVNITKHSLKPQHQVLNDEEKTTLLKKFSIEEKQLPRISKKDAIVRYYGLEKGQVVKVNYRGELTESHVAFRCVW.

This sequence belongs to the archaeal Rpo5/eukaryotic RPB5 RNA polymerase subunit family. Component of the RNA polymerase V complex. Expressed in roots, leaves, siliques and seeds, and to a lower level, in flower buds and flowers.

It localises to the nucleus. DNA-dependent RNA polymerase catalyzes the transcription of DNA into RNA using the four ribonucleoside triphosphates as substrates. Component of RNA polymerase V involved in RNA-directed DNA methylation-dependent (RdDM) silencing of endogenous repeated sequences, including transposable elements. Required for establishment of DNA methylation. The chain is DNA-directed RNA polymerase V subunit 5A (NRPE5A) from Arabidopsis thaliana (Mouse-ear cress).